Here is a 299-residue protein sequence, read N- to C-terminus: 4-hydroxy-3-methylbut-2-enyl diphosphate reductase (299 aa).

Residue cysteine 12 participates in [4Fe-4S] cluster binding. (2E)-4-hydroxy-3-methylbut-2-enyl diphosphate contacts are provided by histidine 42 and histidine 88. Positions 42 and 88 each coordinate dimethylallyl diphosphate. Isopentenyl diphosphate-binding residues include histidine 42 and histidine 88. Cysteine 110 contacts [4Fe-4S] cluster. Histidine 138 is a binding site for (2E)-4-hydroxy-3-methylbut-2-enyl diphosphate. Histidine 138 contributes to the dimethylallyl diphosphate binding site. Histidine 138 is a binding site for isopentenyl diphosphate. Glutamate 140 serves as the catalytic Proton donor. Threonine 177 is a binding site for (2E)-4-hydroxy-3-methylbut-2-enyl diphosphate. Position 205 (cysteine 205) interacts with [4Fe-4S] cluster. The (2E)-4-hydroxy-3-methylbut-2-enyl diphosphate site is built by serine 233, asparagine 235, and serine 277. Serine 233, asparagine 235, and serine 277 together coordinate dimethylallyl diphosphate. Residues serine 233, asparagine 235, and serine 277 each coordinate isopentenyl diphosphate.

Belongs to the IspH family. Requires [4Fe-4S] cluster as cofactor.

The catalysed reaction is isopentenyl diphosphate + 2 oxidized [2Fe-2S]-[ferredoxin] + H2O = (2E)-4-hydroxy-3-methylbut-2-enyl diphosphate + 2 reduced [2Fe-2S]-[ferredoxin] + 2 H(+). It catalyses the reaction dimethylallyl diphosphate + 2 oxidized [2Fe-2S]-[ferredoxin] + H2O = (2E)-4-hydroxy-3-methylbut-2-enyl diphosphate + 2 reduced [2Fe-2S]-[ferredoxin] + 2 H(+). Its pathway is isoprenoid biosynthesis; dimethylallyl diphosphate biosynthesis; dimethylallyl diphosphate from (2E)-4-hydroxy-3-methylbutenyl diphosphate: step 1/1. The protein operates within isoprenoid biosynthesis; isopentenyl diphosphate biosynthesis via DXP pathway; isopentenyl diphosphate from 1-deoxy-D-xylulose 5-phosphate: step 6/6. Its function is as follows. Catalyzes the conversion of 1-hydroxy-2-methyl-2-(E)-butenyl 4-diphosphate (HMBPP) into a mixture of isopentenyl diphosphate (IPP) and dimethylallyl diphosphate (DMAPP). Acts in the terminal step of the DOXP/MEP pathway for isoprenoid precursor biosynthesis. This Malacoplasma penetrans (strain HF-2) (Mycoplasma penetrans) protein is 4-hydroxy-3-methylbut-2-enyl diphosphate reductase.